A 75-amino-acid chain; its full sequence is Large ribosomal subunit protein bL31 (75 aa).

This sequence belongs to the bacterial ribosomal protein bL31 family. Type A subfamily. As to quaternary structure, part of the 50S ribosomal subunit.

In terms of biological role, binds the 23S rRNA. This Rhodopseudomonas palustris (strain BisB5) protein is Large ribosomal subunit protein bL31.